The sequence spans 137 residues: Seminal plasma sperm motility inhibitor (137 aa).

Positions M1–T21 are cleaved as a signal peptide. An intrachain disulfide couples C30 to C51. Positions C30–I131 constitute a CUB domain. A glycan (N-linked (GlcNAc...) asparagine) is linked at N36.

Belongs to the spermadhesin family. In terms of tissue distribution, seminal plasma or sperm.

The protein localises to the secreted. Inhibitor of sperm motility. This is Seminal plasma sperm motility inhibitor (SPMI) from Sus scrofa (Pig).